The chain runs to 477 residues: MAISPWKQFKLSVLNANQWFRKTPERALNMAYDAANKIRSIEEEHFEGRKISNVSISYSNSTKSYFNSQLNRYLKIIQVRLAEFNTSISVVGTLDQNKVDKQKDKFDQNYQQEFPGRSSIILDKLEFIDQVSSRYYKSSNHEAQELNTDLEIPHSSSSIAIVSSNVNVNNYPNNVRAGSSQNQNNLAELKSNIPNTNFLPRSLLKTFKKIKQELDPEAETEVIRKFRKSQIKTLTSVRFILLVILVPLLIHQLSKITFVGYLVDNFMSLPHQQAELFLNSNMEEEALVKLHQYEEKLHFKMYLGQAPELFPELYESGKEITEIPKSEREELIEHKVEKKAQEIALEYKAKGNNGIKNIFCDFISLITFVIIISTRKRELEVLKSFMDDVVYGLSDSAKAFIIILLTDMFVGFHSPHGWEVILENITRHFGLPESRDFNFLFIATFPVILDAVFKYWIFRYLNRSSPSAVATYKNMNE.

The next 3 helical transmembrane spans lie at 239–259, 354–374, and 437–457; these read FILLVILVPLLIHQLSKITFV, GIKNIFCDFISLITFVIIIST, and FNFLFIATFPVILDAVFKYWI.

Belongs to the CemA family.

It localises to the cell inner membrane. Functionally, required for H(+) efflux immediately after light irradiation to form a rapid H(+) concentration gradient across the thylakoid membranes. Together with PxcL, contributes to transient H(+) uptake following dark to light transition. This chain is Proton extrusion protein PxcA, found in Trichodesmium erythraeum (strain IMS101).